The primary structure comprises 690 residues: Protein hook (690 aa).

Residues 6–122 form the Calponin-homology (CH) domain; that stretch reads MEIYESLIRW…RLLQLILGCA (117 aa). Coiled coils occupy residues 134–515 and 546–577; these read QIME…HHAE and ETTQHQLSNLHTKIANLEAALVVKDQELQAAD.

It belongs to the hook family. As to quaternary structure, homodimer. Interacts with microtubules via its N-terminus.

The protein localises to the cytoplasm. The protein resides in the cytoskeleton. It localises to the endosome. Functionally, involved in endocytic trafficking. Probably acts as a cytoskeletal linker protein that tethers endosome vesicles to the cytoskeleton. In Anopheles gambiae (African malaria mosquito), this protein is Protein hook.